The sequence spans 319 residues: ATP-dependent 6-phosphofructokinase (319 aa).

An ATP-binding site is contributed by G11. 21-25 (RAVVR) contributes to the ADP binding site. ATP contacts are provided by residues 72-73 (RC) and 102-105 (GDGS). D103 provides a ligand contact to Mg(2+). 125–127 (TID) is a substrate binding site. The active-site Proton acceptor is D127. Residue R154 participates in ADP binding. Substrate is bound by residues R162 and 169-171 (MGR). ADP is bound by residues 185–187 (GAE), R211, and 213–215 (KKH). Substrate contacts are provided by residues E222, R243, and 249-252 (HVQR).

It belongs to the phosphofructokinase type A (PFKA) family. ATP-dependent PFK group I subfamily. Prokaryotic clade 'B1' sub-subfamily. Homotetramer. Mg(2+) serves as cofactor.

The protein resides in the cytoplasm. It catalyses the reaction beta-D-fructose 6-phosphate + ATP = beta-D-fructose 1,6-bisphosphate + ADP + H(+). It participates in carbohydrate degradation; glycolysis; D-glyceraldehyde 3-phosphate and glycerone phosphate from D-glucose: step 3/4. With respect to regulation, allosterically activated by ADP and other diphosphonucleosides, and allosterically inhibited by phosphoenolpyruvate. Functionally, catalyzes the phosphorylation of D-fructose 6-phosphate to fructose 1,6-bisphosphate by ATP, the first committing step of glycolysis. The chain is ATP-dependent 6-phosphofructokinase from Geobacillus kaustophilus (strain HTA426).